The primary structure comprises 511 residues: GMP synthase [glutamine-hydrolyzing] (511 aa).

A Glutamine amidotransferase type-1 domain is found at 5-195; the sequence is PIVVLDFGSQ…AKHICGCEST (191 aa). Cys82 serves as the catalytic Nucleophile. Catalysis depends on residues His169 and Glu171. The GMPS ATP-PPase domain occupies 196-386; it reads WNMGSFAKEQ…LGLPKSMISR (191 aa). 223–229 is a binding site for ATP; sequence SGGVDSS.

As to quaternary structure, homodimer.

It carries out the reaction XMP + L-glutamine + ATP + H2O = GMP + L-glutamate + AMP + diphosphate + 2 H(+). Its pathway is purine metabolism; GMP biosynthesis; GMP from XMP (L-Gln route): step 1/1. Functionally, catalyzes the synthesis of GMP from XMP. This chain is GMP synthase [glutamine-hydrolyzing], found in Aliarcobacter butzleri (strain RM4018) (Arcobacter butzleri).